We begin with the raw amino-acid sequence, 90 residues long: Conotoxin Ca8.2 (90 aa).

The first 21 residues, 1–21 (MMLKMGAMFVLLLLFILPSSQ), serve as a signal peptide directing secretion. Positions 22–46 (QEGDVQARKTHLKRGFYGTLAMSTR) are excised as a propeptide. Glutamine 89 carries the glutamine amide modification.

This sequence belongs to the conotoxin S superfamily. Post-translationally, contains 5 disulfide bonds. Expressed by the venom duct.

Its subcellular location is the secreted. This is Conotoxin Ca8.2 from Conus caracteristicus (Characteristic cone).